The sequence spans 335 residues: Biotin synthase (335 aa).

The Radical SAM core domain occupies Tyr-46–Arg-274. 3 residues coordinate [4Fe-4S] cluster: Cys-61, Cys-65, and Cys-68. The [2Fe-2S] cluster site is built by Cys-105, Cys-137, Cys-197, and Arg-269.

It belongs to the radical SAM superfamily. Biotin synthase family. Homodimer. Requires [4Fe-4S] cluster as cofactor. The cofactor is [2Fe-2S] cluster.

It carries out the reaction (4R,5S)-dethiobiotin + (sulfur carrier)-SH + 2 reduced [2Fe-2S]-[ferredoxin] + 2 S-adenosyl-L-methionine = (sulfur carrier)-H + biotin + 2 5'-deoxyadenosine + 2 L-methionine + 2 oxidized [2Fe-2S]-[ferredoxin]. It participates in cofactor biosynthesis; biotin biosynthesis; biotin from 7,8-diaminononanoate: step 2/2. In terms of biological role, catalyzes the conversion of dethiobiotin (DTB) to biotin by the insertion of a sulfur atom into dethiobiotin via a radical-based mechanism. This chain is Biotin synthase, found in Prochlorococcus marinus subsp. pastoris (strain CCMP1986 / NIES-2087 / MED4).